A 103-amino-acid polypeptide reads, in one-letter code: Glutaredoxin-C11 (103 aa).

One can recognise a Glutaredoxin domain in the interval 1 to 102 (MERIRDLSSK…QMLKDAKAIW (102 aa)). A disulfide bridge connects residues cysteine 21 and cysteine 24.

Belongs to the glutaredoxin family. CC-type subfamily.

It is found in the cytoplasm. Has a glutathione-disulfide oxidoreductase activity in the presence of NADPH and glutathione reductase. Reduces low molecular weight disulfides and proteins. The chain is Glutaredoxin-C11 (GRXC11) from Arabidopsis thaliana (Mouse-ear cress).